The sequence spans 536 residues: Cytochrome P450 monooxygenase pbrC (536 aa).

A helical membrane pass occupies residues 20–39 (VMLPALVGFAFLIYQAFFAI). Position 479 (C479) interacts with heme.

The protein belongs to the cytochrome P450 family. It depends on heme as a cofactor.

It is found in the membrane. It participates in secondary metabolite biosynthesis; terpenoid biosynthesis. Its function is as follows. Cytochrome P450 monooxygenase; part of the gene cluster that mediates the biosynthesis of the sesquiterpenoid aspterric acid (AA), an inhibitor of dihydroxy-acid dehydratase (DHAD) effective as an herbicide. PbrC catalyzes the third and last step within the pathway and converts the alpha-epoxy carboxylate intermediate produced by the cytochrome P450 monooxygenase pbrB from (-)daucane into the tricyclic aspterric acid. This Penicillium brasilianum protein is Cytochrome P450 monooxygenase pbrC.